Consider the following 900-residue polypeptide: Alanine--tRNA ligase (900 aa).

4 residues coordinate Zn(2+): His-587, His-591, Cys-691, and His-695.

It belongs to the class-II aminoacyl-tRNA synthetase family. It depends on Zn(2+) as a cofactor.

It localises to the cytoplasm. It carries out the reaction tRNA(Ala) + L-alanine + ATP = L-alanyl-tRNA(Ala) + AMP + diphosphate. Its function is as follows. Catalyzes the attachment of alanine to tRNA(Ala) in a two-step reaction: alanine is first activated by ATP to form Ala-AMP and then transferred to the acceptor end of tRNA(Ala). Also edits incorrectly charged Ser-tRNA(Ala) and Gly-tRNA(Ala) via its editing domain. This is Alanine--tRNA ligase from Aeropyrum pernix (strain ATCC 700893 / DSM 11879 / JCM 9820 / NBRC 100138 / K1).